The primary structure comprises 75 residues: Small ribosomal subunit protein bS18 (75 aa).

This sequence belongs to the bacterial ribosomal protein bS18 family. As to quaternary structure, part of the 30S ribosomal subunit. Forms a tight heterodimer with protein bS6.

Functionally, binds as a heterodimer with protein bS6 to the central domain of the 16S rRNA, where it helps stabilize the platform of the 30S subunit. This Mycoplasma mycoides subsp. mycoides SC (strain CCUG 32753 / NCTC 10114 / PG1) protein is Small ribosomal subunit protein bS18.